We begin with the raw amino-acid sequence, 326 residues long: MAKIYGDEDASLEPLEDKTVAVIGYGSQGEAQAKNLRDSGIDVIIGVREGGPSWERAKKDGFEVLPIPEAAEAGDVVHILIPDEVQPQVYREHIHDNLEKGNALGFSHAYNIHYGLIEPPEYVDVILVAPKGPGHMVRKLYTEGFGTPALVAVHQDYTGEAMDLALAMAKAMGFTRAGVIKTTFREEVETDLFGEQVDLVGGVLYMILYAFETLVEAGYQPEVAYFETLHELKLIVDLIYEKGLSGMLDNVSNTAEYGGLTRGKRIINKEEMRKVLEEIRSGEFAREWTLENESGRIVMKRLREEIENHEIEKVGERLRKMMGFED.

Residues 2–182 enclose the KARI N-terminal Rossmann domain; sequence AKIYGDEDAS…GFTRAGVIKT (181 aa). Residues 25-28, Arg48, Ser53, and 83-86 contribute to the NADP(+) site; these read YGSQ and DEVQ. His108 is an active-site residue. Residue Gly134 coordinates NADP(+). Positions 183 to 325 constitute a KARI C-terminal knotted domain; that stretch reads TFREEVETDL…ERLRKMMGFE (143 aa). Mg(2+) contacts are provided by Asp191, Glu195, Glu227, and Glu231. Ser252 is a substrate binding site.

This sequence belongs to the ketol-acid reductoisomerase family. Mg(2+) serves as cofactor.

It carries out the reaction (2R)-2,3-dihydroxy-3-methylbutanoate + NADP(+) = (2S)-2-acetolactate + NADPH + H(+). The enzyme catalyses (2R,3R)-2,3-dihydroxy-3-methylpentanoate + NADP(+) = (S)-2-ethyl-2-hydroxy-3-oxobutanoate + NADPH + H(+). It participates in amino-acid biosynthesis; L-isoleucine biosynthesis; L-isoleucine from 2-oxobutanoate: step 2/4. Its pathway is amino-acid biosynthesis; L-valine biosynthesis; L-valine from pyruvate: step 2/4. In terms of biological role, involved in the biosynthesis of branched-chain amino acids (BCAA). Catalyzes an alkyl-migration followed by a ketol-acid reduction of (S)-2-acetolactate (S2AL) to yield (R)-2,3-dihydroxy-isovalerate. In the isomerase reaction, S2AL is rearranged via a Mg-dependent methyl migration to produce 3-hydroxy-3-methyl-2-ketobutyrate (HMKB). In the reductase reaction, this 2-ketoacid undergoes a metal-dependent reduction by NADPH to yield (R)-2,3-dihydroxy-isovalerate. The protein is Ketol-acid reductoisomerase (NADP(+)) of Methanopyrus kandleri (strain AV19 / DSM 6324 / JCM 9639 / NBRC 100938).